A 399-amino-acid polypeptide reads, in one-letter code: Tryptophan synthase beta chain (399 aa).

K91 is subject to N6-(pyridoxal phosphate)lysine.

This sequence belongs to the TrpB family. As to quaternary structure, tetramer of two alpha and two beta chains. It depends on pyridoxal 5'-phosphate as a cofactor.

The catalysed reaction is (1S,2R)-1-C-(indol-3-yl)glycerol 3-phosphate + L-serine = D-glyceraldehyde 3-phosphate + L-tryptophan + H2O. It functions in the pathway amino-acid biosynthesis; L-tryptophan biosynthesis; L-tryptophan from chorismate: step 5/5. The beta subunit is responsible for the synthesis of L-tryptophan from indole and L-serine. This chain is Tryptophan synthase beta chain, found in Shouchella clausii (strain KSM-K16) (Alkalihalobacillus clausii).